Reading from the N-terminus, the 260-residue chain is Taurine import ATP-binding protein TauB (260 aa).

The ABC transporter domain maps to 6 to 235; that stretch reads AQQVSVVYAS…RYAHGEPVRS (230 aa). Residue 40 to 47 participates in ATP binding; that stretch reads GASGCGKS.

This sequence belongs to the ABC transporter superfamily. Taurine importer (TC 3.A.1.17.1) family. In terms of assembly, the complex is composed of two ATP-binding proteins (TauB), two transmembrane proteins (TauC) and a solute-binding protein (TauA).

The protein localises to the cell inner membrane. It carries out the reaction taurine(out) + ATP + H2O = taurine(in) + ADP + phosphate + H(+). Functionally, part of the ABC transporter complex TauABC involved in taurine import. Responsible for energy coupling to the transport system. In Burkholderia pseudomallei (strain K96243), this protein is Taurine import ATP-binding protein TauB.